The chain runs to 384 residues: S-adenosylmethionine synthase (384 aa).

His-15 serves as a coordination point for ATP. Asp-17 lines the Mg(2+) pocket. A K(+)-binding site is contributed by Glu-43. L-methionine is bound by residues Glu-56 and Gln-99. The interval 99-109 is flexible loop; the sequence is QSPDINQGVDR. Residues 164–166, 230–231, Asp-239, 245–246, Ala-262, and Lys-266 each bind ATP; these read DAK, RF, and RK. L-methionine is bound at residue Asp-239. L-methionine is bound at residue Lys-270.

This sequence belongs to the AdoMet synthase family. Homotetramer; dimer of dimers. It depends on Mg(2+) as a cofactor. Requires K(+) as cofactor.

Its subcellular location is the cytoplasm. The enzyme catalyses L-methionine + ATP + H2O = S-adenosyl-L-methionine + phosphate + diphosphate. Its pathway is amino-acid biosynthesis; S-adenosyl-L-methionine biosynthesis; S-adenosyl-L-methionine from L-methionine: step 1/1. Functionally, catalyzes the formation of S-adenosylmethionine (AdoMet) from methionine and ATP. The overall synthetic reaction is composed of two sequential steps, AdoMet formation and the subsequent tripolyphosphate hydrolysis which occurs prior to release of AdoMet from the enzyme. This is S-adenosylmethionine synthase from Proteus mirabilis (strain HI4320).